We begin with the raw amino-acid sequence, 541 residues long: Chaperonin GroEL 1 (541 aa).

ATP contacts are provided by residues 29 to 32 (TLGP), 86 to 90 (DGTTT), glycine 413, 477 to 479 (NAA), and aspartate 493.

Belongs to the chaperonin (HSP60) family. Forms a cylinder of 14 subunits composed of two heptameric rings stacked back-to-back. Interacts with the co-chaperonin GroES.

It localises to the cytoplasm. It carries out the reaction ATP + H2O + a folded polypeptide = ADP + phosphate + an unfolded polypeptide.. Functionally, together with its co-chaperonin GroES, plays an essential role in assisting protein folding. The GroEL-GroES system forms a nano-cage that allows encapsulation of the non-native substrate proteins and provides a physical environment optimized to promote and accelerate protein folding. The sequence is that of Chaperonin GroEL 1 from Nocardioides sp. (strain ATCC BAA-499 / JS614).